A 305-amino-acid polypeptide reads, in one-letter code: uncharacterized protein (305 aa).

This is an uncharacterized protein from Sinorhizobium fredii (strain NBRC 101917 / NGR234).